Consider the following 319-residue polypeptide: Na(+)-translocating NADH-quinone reductase subunit C (319 aa).

A helical transmembrane segment spans residues 14 to 34 (WYVILFIFALSLFSSVFLSTV). Thr283 is modified (FMN phosphoryl threonine).

It belongs to the NqrC family. Composed of six subunits; NqrA, NqrB, NqrC, NqrD, NqrE and NqrF. The cofactor is FMN.

The protein localises to the cell inner membrane. The enzyme catalyses a ubiquinone + n Na(+)(in) + NADH + H(+) = a ubiquinol + n Na(+)(out) + NAD(+). In terms of biological role, NQR complex catalyzes the reduction of ubiquinone-1 to ubiquinol by two successive reactions, coupled with the transport of Na(+) ions from the cytoplasm to the periplasm. NqrA to NqrE are probably involved in the second step, the conversion of ubisemiquinone to ubiquinol. This chain is Na(+)-translocating NADH-quinone reductase subunit C, found in Chlamydia caviae (strain ATCC VR-813 / DSM 19441 / 03DC25 / GPIC) (Chlamydophila caviae).